We begin with the raw amino-acid sequence, 217 residues long: Tectonin-1 (217 aa).

Repeat copies occupy residues 2-37 (VHWE…HWDG), 38-74 (HKWH…DRSN), 75-111 (NKWT…DHHH), 112-146 (NKWD…RWDG), 147-182 (SKVD…LKHG), and 183-217 (KDWE…KATL). The interval 2–217 (VHWEKHEGEL…KLHHIYKATL (216 aa)) is 6 X approximate tandem repeats.

It belongs to the tectonin family.

It is found in the cell surface. The protein resides in the cytoplasmic vesicle membrane. In terms of biological role, probably involved in bacterial recognition. May be a lectin that function as part of a transmembrane signaling complex during phagocytosis. In Physarum polycephalum (Slime mold), this protein is Tectonin-1 (TECA).